A 236-amino-acid polypeptide reads, in one-letter code: Bidirectional sugar transporter SWEET2 (236 aa).

Residues 1–15 (MDVFAFNASLSMCKD) are Extracellular-facing. Asn-7 carries N-linked (GlcNAc...) asparagine glycosylation. Residues 16-36 (VAGIAGNIFAFGLFVSPMPTF) traverse the membrane as a helical segment. The region spanning 18–103 (GIAGNIFAFG…ILFIMHTDKK (86 aa)) is the MtN3/slv 1 domain. Residues 37 to 50 (RRIMRNKSTEQFSG) are Cytoplasmic-facing. Residues 51–71 (LPYIYALLNCLICLWYGTPFI) traverse the membrane as a helical segment. Residues 72-76 (SHSNA) are Extracellular-facing. The helical transmembrane segment at 77-97 (MLMTVNSVGATFQLCYIILFI) threads the bilayer. The Cytoplasmic portion of the chain corresponds to 98–108 (MHTDKKNKMKM). Residues 109-129 (LGLLFVVFAVVGVIVAGSLQI) form a helical membrane-spanning segment. Residues 130-137 (PDQLTRWY) are Extracellular-facing. A helical membrane pass occupies residues 138–158 (FVGFLSCGSLVSMFASPLFVI). One can recognise a MtN3/slv 2 domain in the interval 138-221 (FVGFLSCGSL…LALYCYYHRN (84 aa)). Over 159 to 170 (NLVIRTKSVEFM) the chain is Cytoplasmic. A helical membrane pass occupies residues 171–191 (PFYLSLSTFLMSASFLLYGLF). Over 192-194 (NSD) the chain is Extracellular. The chain crosses the membrane as a helical span at residues 195-215 (AFVYTPNGIGTILGIVQLALY). Topologically, residues 216-236 (CYYHRNSIEEETKEPLIVSYV) are cytoplasmic.

It belongs to the SWEET sugar transporter family. As to quaternary structure, forms heterooligomers with SWEET17.

The protein localises to the cell membrane. Functionally, mediates both low-affinity uptake and efflux of sugar across the plasma membrane. This Arabidopsis thaliana (Mouse-ear cress) protein is Bidirectional sugar transporter SWEET2.